The chain runs to 100 residues: CCAAT/enhancer-binding protein homolog 2 (100 aa).

2 disordered regions span residues 1-60 (MSGN…ETLE) and 79-100 (AYAK…SSAV). The bZIP domain occupies 17 to 80 (EDDYSTKRKR…SFLKEMFMAY (64 aa)). The tract at residues 23–48 (KRKRNNEAVNRTRQKKRQEENDTAEK) is basic motif. Positions 24-83 (RKRNNEAVNRTRQKKRQEENDTAEKVDELKKENETLERKVEQLQKELSFLKEMFMAYAKN) form a coiled coil. The span at 39–60 (RQEENDTAEKVDELKKENETLE) shows a compositional bias: basic and acidic residues. A leucine-zipper region spans residues 52 to 73 (LKKENETLERKVEQLQKELSFL). Pro residues predominate over residues 88–100 (GPPPPPPPSSSAV).

This sequence belongs to the bZIP family. C/EBP subfamily. Interacts with transcription factor zip-11. As to expression, expressed broadly in somatic tissues including the intestine.

It is found in the nucleus. Functionally, transcription factor that binds to the promoter and the enhancer regions of target genes. Regulates expression of genes involved in fat metabolism, including ech-1.1 and fat-5. Has a protective role in response to infection by the Gram-negative bacterium P.aeruginosa. Required for the activation of infection response gene irg-1 following P.aeruginosa infection. Required to prevent P.aeruginosa ToxA-mediated lethality. May also function in concert with transcription factor zip-11 to mediate immune responses, independently of the pmk-1/p38 MAPK pathway. May act together with the bZIP transcription factor, zip-2. The sequence is that of CCAAT/enhancer-binding protein homolog 2 from Caenorhabditis elegans.